Reading from the N-terminus, the 185-residue chain is Inner membrane lipoprotein DcrB (185 aa).

A signal peptide spans 1 to 19 (MRNLVKYVGIGLLVMGLAA). A lipid anchor (N-palmitoyl cysteine) is attached at Cys-20. Residue Cys-20 is the site of S-diacylglycerol cysteine attachment.

This sequence belongs to the DcrB family.

The protein resides in the cell membrane. Functionally, plays a role in cell envelope biogenesis, maintenance of cell envelope integrity and membrane homeostasis. Essential for lipoprotein maturation under conditions where membrane fluidity may be altered. The polypeptide is Inner membrane lipoprotein DcrB (Shigella flexneri).